Reading from the N-terminus, the 315-residue chain is Protoheme IX farnesyltransferase 1 (315 aa).

Helical transmembrane passes span 25 to 45 (PGII…AAKG), 49 to 69 (LALM…GCAV), 87 to 107 (RVTV…LALG), 120 to 139 (ALAL…VYSL), 145 to 165 (SVYG…VGYC), 176 to 196 (AILL…IAIF), 220 to 240 (LHIV…PLAG), 242 to 262 (TGIA…AMAL), and 280 to 300 (GFSI…SQVI).

The protein belongs to the UbiA prenyltransferase family. Protoheme IX farnesyltransferase subfamily.

Its subcellular location is the cell inner membrane. It catalyses the reaction heme b + (2E,6E)-farnesyl diphosphate + H2O = Fe(II)-heme o + diphosphate. The protein operates within porphyrin-containing compound metabolism; heme O biosynthesis; heme O from protoheme: step 1/1. Converts heme B (protoheme IX) to heme O by substitution of the vinyl group on carbon 2 of heme B porphyrin ring with a hydroxyethyl farnesyl side group. The polypeptide is Protoheme IX farnesyltransferase 1 (Shewanella sp. (strain W3-18-1)).